Reading from the N-terminus, the 198-residue chain is Transmembrane gamma-carboxyglutamic acid protein 2 (198 aa).

Positions 1-17 (MRGRPSLLLVYMGLATC) are cleaved as a signal peptide. Positions 18–51 (LDTSPHREQNQVLDIFLDAPEAQSFLVGRRRFPR) are excised as a propeptide. Positions 52–98 (ANHWDLELLTPGNLERECLEERCSWEEAREYFEDNTLTERFWESYTY) constitute a Gla domain. The Extracellular portion of the chain corresponds to 52-111 (ANHWDLELLTPGNLERECLEERCSWEEAREYFEDNTLTERFWESYTYNGKGGRGRVDVAG). Residues C69 and C74 are joined by a disulfide bond. Residue E72 is modified to 4-carboxyglutamate. A helical membrane pass occupies residues 112–132 (LAVGLTSGILLIVLAGLGAFW). The Cytoplasmic portion of the chain corresponds to 133–198 (YLHYRRRRLR…PPYSSLRRPH (66 aa)). The segment at 156-198 (PLSPQTPQSPPLPPGLPTYEQALAASGVHDAPPPPYSSLRRPH) is disordered. Residues 162–171 (PQSPPLPPGL) are compositionally biased toward pro residues. The LPXY motif; mediates binding to WW domain-containing proteins signature appears at 171-174 (LPTY). The PPXY motif; mediates binding to WW domain-containing proteins motif lies at 188-191 (PPPY).

In terms of assembly, interacts with NEDD4. Interacts with transcriptional coactivator YAP1. Gamma-carboxyglutamate residues are formed by vitamin K dependent carboxylation. These residues are essential for the binding of calcium.

The protein localises to the cell membrane. The sequence is that of Transmembrane gamma-carboxyglutamic acid protein 2 (Prrg2) from Mus musculus (Mouse).